A 57-amino-acid chain; its full sequence is DELTA-limacoditoxin(2)-Dv11 (57 aa).

Positions 1–24 (MKFAKTFLLLFVVLLLLSIVMAEP) are cleaved as a signal peptide.

This sequence belongs to the limacoditoxin-2 (cecropin-like) family. Expressed by the venom secretory cell of the spine. The spine is a cuticular structure containing a single large nucleated venom-secreting cell at its base. It is an independent unit capable of producing, storing and injecting venom. On the back of D.vulnerans caterpillars, spines are grouped together by 50 to 100 to form scoli, of which there are eight in D.vulnerans.

Its subcellular location is the secreted. Its function is as follows. Peptide that induces pain in mammals and has insecticidal, antibacterial and antiparasitic activities. Induces partially reversible paralysis in D.melanogaster when tested at high doses. Shows a moderate antiparasitic activity against the major pathogenic nematode of ruminants (H.contortus, EC(50)=30.5 uM). Has potent or moderate antibacterial activities against A.baumannii (MIC&lt;0.25 ug/mL) and S.aureus (MIC=16 ug/mL). Has no activity on the other bacteria tested, nor on the fungus C.albicans. Strongly induces the increase of intracellular calcium in mice DRG neurons, which is a proxy for neuronal activation that would occur during nociception. This increase is due to influx of extracellular calcium, suggesting that the peptide forms pore or channel in neuronal cell membranes. In addition, intraplantar injection in mice provokes nocifensive behavior, suggesting a pain-inducing activity. In Doratifera vulnerans (Mottled cup moth), this protein is DELTA-limacoditoxin(2)-Dv11.